The sequence spans 261 residues: Protein-ADP-ribose hydrolase (261 aa).

Positions 74–261 (ADLKPVTGRG…DEALYNKLMS (188 aa)) constitute a Macro domain. ADP-D-ribose is bound by residues Asp-93, Ile-94, and Asn-107. Residues Cys-113, His-118, and Cys-120 each coordinate Zn(2+). ADP-D-ribose is bound by residues Cys-120, Ile-121, Asp-122, Ser-211, Thr-212, Gly-213, and Phe-215.

Belongs to the MacroD-type family. Zn-Macro subfamily. Requires Zn(2+) as cofactor.

The enzyme catalyses 4-O-(ADP-D-ribosyl)-L-aspartyl-[protein] + H2O = L-aspartyl-[protein] + ADP-D-ribose + H(+). In terms of biological role, ADP-ribosylhydrolase that specifically reverses the SirTM-mediated mono-ADP-ribosylation at an asparatate residue of GcvH-L, by releasing ADP-ribose from the target protein. May play a role in the regulation of the response to host-induced oxidative stress. The chain is Protein-ADP-ribose hydrolase from Treponema medium.